The primary structure comprises 202 residues: 3-isopropylmalate dehydratase small subunit 1 (202 aa).

The protein belongs to the LeuD family. LeuD type 1 subfamily. In terms of assembly, heterodimer of LeuC and LeuD.

It carries out the reaction (2R,3S)-3-isopropylmalate = (2S)-2-isopropylmalate. It functions in the pathway amino-acid biosynthesis; L-leucine biosynthesis; L-leucine from 3-methyl-2-oxobutanoate: step 2/4. Functionally, catalyzes the isomerization between 2-isopropylmalate and 3-isopropylmalate, via the formation of 2-isopropylmaleate. The sequence is that of 3-isopropylmalate dehydratase small subunit 1 from Bordetella pertussis (strain Tohama I / ATCC BAA-589 / NCTC 13251).